The chain runs to 67 residues: COP9 signalosome complex subunit 9 homolog (67 aa).

Residues 1 to 31 (MKPSLAADEMFSEGPGYMEMDESGGATGMMM) form a disordered region.

Belongs to the CSN9 family. As to quaternary structure, probable component of the COP9 signalosome (CSN) complex.

In terms of biological role, component of the COP9 signalosome complex (CSN), a complex involved in various cellular and developmental processes. The CSN complex is an essential regulator of the ubiquitin (Ubl) conjugation pathway by mediating the deneddylation of the cullin subunits of SCF-type E3 ligase complexes, leading to decrease the Ubl ligase activity. This chain is COP9 signalosome complex subunit 9 homolog, found in Drosophila melanogaster (Fruit fly).